The sequence spans 214 residues: Osteoclast-stimulating factor 1 (214 aa).

The region spanning 12 to 71 (GQVKVYRALFTFDPRTPDELYFEEGDILYISDTSDSNWWKGTCRGRTGLIPSNYVAEQAE) is the SH3 domain. 3 ANK repeats span residues 72–101 (SIDN…GING), 105–135 (AGNT…ELNQ), and 139–168 (LGDT…RTDV).

Its subcellular location is the cytoplasm. In terms of biological role, induces bone resorption, acting probably through a signaling cascade which results in the secretion of factor(s) enhancing osteoclast formation and activity. In Danio rerio (Zebrafish), this protein is Osteoclast-stimulating factor 1 (ostf1).